Consider the following 923-residue polypeptide: Isoleucine--tRNA ligase (923 aa).

Residues Pro57–His67 carry the 'HIGH' region motif. Residue Glu553 participates in L-isoleucyl-5'-AMP binding. A 'KMSKS' region motif is present at residues Lys594–Ser598. Lys597 provides a ligand contact to ATP. Residues Cys888, Cys891, Cys908, and Cys911 each contribute to the Zn(2+) site.

It belongs to the class-I aminoacyl-tRNA synthetase family. IleS type 1 subfamily. In terms of assembly, monomer. The cofactor is Zn(2+).

The protein localises to the cytoplasm. The catalysed reaction is tRNA(Ile) + L-isoleucine + ATP = L-isoleucyl-tRNA(Ile) + AMP + diphosphate. Its function is as follows. Catalyzes the attachment of isoleucine to tRNA(Ile). As IleRS can inadvertently accommodate and process structurally similar amino acids such as valine, to avoid such errors it has two additional distinct tRNA(Ile)-dependent editing activities. One activity is designated as 'pretransfer' editing and involves the hydrolysis of activated Val-AMP. The other activity is designated 'posttransfer' editing and involves deacylation of mischarged Val-tRNA(Ile). The chain is Isoleucine--tRNA ligase from Shouchella clausii (strain KSM-K16) (Alkalihalobacillus clausii).